We begin with the raw amino-acid sequence, 297 residues long: PsbP domain-containing protein 5, chloroplastic (297 aa).

Belongs to the PsbP family.

The protein resides in the plastid. The protein localises to the chloroplast thylakoid lumen. Its function is as follows. Involved in strigolactone biosynthesis. The chain is PsbP domain-containing protein 5, chloroplastic (PPD5) from Arabidopsis thaliana (Mouse-ear cress).